The chain runs to 121 residues: ATP synthase epsilon chain (121 aa).

This sequence belongs to the ATPase epsilon chain family. As to quaternary structure, F-type ATPases have 2 components, CF(1) - the catalytic core - and CF(0) - the membrane proton channel. CF(1) has five subunits: alpha(3), beta(3), gamma(1), delta(1), epsilon(1). CF(0) has three main subunits: a, b and c.

The protein localises to the cell membrane. Its function is as follows. Produces ATP from ADP in the presence of a proton gradient across the membrane. This Mycobacterium avium (strain 104) protein is ATP synthase epsilon chain.